The sequence spans 218 residues: Glutathione S-transferase Mu 1 (218 aa).

The 87-residue stretch at 2 to 88 folds into the GST N-terminal domain; it reads PMILGYWDIR…YIARKHNLCG (87 aa). Residues 7–8, 43–46, Lys50, 59–60, and 72–73 contribute to the glutathione site; these read YW, RSQW, NL, and QS. Positions 90–208 constitute a GST C-terminal domain; the sequence is TEEEMIRVDI…KSSRFLPGPL (119 aa). Tyr116 lines the substrate pocket.

It belongs to the GST superfamily. Mu family. In terms of assembly, homodimer.

It localises to the cytoplasm. The enzyme catalyses RX + glutathione = an S-substituted glutathione + a halide anion + H(+). It catalyses the reaction prostaglandin A2 + glutathione = prostaglandin A2-S-(R)-glutathione. The catalysed reaction is prostaglandin J2 + glutathione = prostaglandin J2-S-(R)-glutathione. It carries out the reaction prostaglandin J2 + glutathione = prostaglandin J2-S-(S)-glutathione. The enzyme catalyses prostaglandin A2 + glutathione = prostaglandin A2-S-(S)-glutathione. It catalyses the reaction 11(S)-hydroxy-14(S),15(S)-epoxy-(5Z,8Z,12E)-eicosatrienoate + glutathione = (11S,15S)-dihydroxy-14(R)-S-glutathionyl-(5Z,8Z,12E)-eicosatrienoate. In terms of biological role, conjugation of reduced glutathione to a wide number of exogenous and endogenous hydrophobic electrophiles. Protects against the thiol-mediated metal-catalyzed oxidative inactivation of enzymes. Involved in the formation of glutathione conjugates of both prostaglandin A2 (PGA2) and prostaglandin J2 (PGJ2). Participates in the formation of novel hepoxilin regioisomers. The chain is Glutathione S-transferase Mu 1 (GSTM1) from Bos taurus (Bovine).